Reading from the N-terminus, the 364-residue chain is Dual-specificity RNA methyltransferase RlmN (364 aa).

Glu-91 (proton acceptor) is an active-site residue. Residues 97–333 (ESDRGTLCIS…VTVRKTRGDD (237 aa)) enclose the Radical SAM core domain. Cys-104 and Cys-338 are disulfide-bonded. Cys-111, Cys-115, and Cys-118 together coordinate [4Fe-4S] cluster. Residues 164-165 (GE), Ser-196, 218-220 (SLH), and Asn-295 contribute to the S-adenosyl-L-methionine site. The S-methylcysteine intermediate role is filled by Cys-338.

It belongs to the radical SAM superfamily. RlmN family. [4Fe-4S] cluster is required as a cofactor.

The protein resides in the cytoplasm. The enzyme catalyses adenosine(2503) in 23S rRNA + 2 reduced [2Fe-2S]-[ferredoxin] + 2 S-adenosyl-L-methionine = 2-methyladenosine(2503) in 23S rRNA + 5'-deoxyadenosine + L-methionine + 2 oxidized [2Fe-2S]-[ferredoxin] + S-adenosyl-L-homocysteine. It carries out the reaction adenosine(37) in tRNA + 2 reduced [2Fe-2S]-[ferredoxin] + 2 S-adenosyl-L-methionine = 2-methyladenosine(37) in tRNA + 5'-deoxyadenosine + L-methionine + 2 oxidized [2Fe-2S]-[ferredoxin] + S-adenosyl-L-homocysteine. Functionally, specifically methylates position 2 of adenine 2503 in 23S rRNA and position 2 of adenine 37 in tRNAs. m2A2503 modification seems to play a crucial role in the proofreading step occurring at the peptidyl transferase center and thus would serve to optimize ribosomal fidelity. In Neisseria meningitidis serogroup C (strain 053442), this protein is Dual-specificity RNA methyltransferase RlmN.